A 102-amino-acid polypeptide reads, in one-letter code: Large ribosomal subunit protein uL24 (102 aa).

The protein belongs to the universal ribosomal protein uL24 family. As to quaternary structure, part of the 50S ribosomal subunit.

Functionally, one of two assembly initiator proteins, it binds directly to the 5'-end of the 23S rRNA, where it nucleates assembly of the 50S subunit. One of the proteins that surrounds the polypeptide exit tunnel on the outside of the subunit. The sequence is that of Large ribosomal subunit protein uL24 from Cupriavidus necator (strain ATCC 17699 / DSM 428 / KCTC 22496 / NCIMB 10442 / H16 / Stanier 337) (Ralstonia eutropha).